The primary structure comprises 250 residues: Accessory gland-specific peptide 26Aa (250 aa).

An N-terminal signal peptide occupies residues 1-18 (MNQILLCSQILLLFFTVA). The disordered stretch occupies residues 79–100 (DYPINNSKSRKNSSTLPSPILT). Positions 82-95 (INNSKSRKNSSTLP) are enriched in polar residues. 3 N-linked (GlcNAc...) asparagine glycosylation sites follow: N83, N90, and N131. 2 disordered regions span residues 172–191 (NVQN…SKDI) and 230–250 (NNPA…PSTT). The span at 178–187 (KSTKSCKKRP) shows a compositional bias: basic residues. Residues 240–250 (KSPSEGNPSTT) are compositionally biased toward polar residues.

Proteolytically cleaved as it is secreted and in the recipient female. As to expression, main cells of the accessory glands of males.

The protein resides in the secreted. The protein localises to the extracellular space. This protein is transferred from male to female's hemolymph during mating, affecting egglaying and behavior after mating. The sequence is that of Accessory gland-specific peptide 26Aa (Acp26Aa) from Drosophila mauritiana (Fruit fly).